Here is a 325-residue protein sequence, read N- to C-terminus: Heat-inducible transcription repressor HrcA (325 aa).

The protein belongs to the HrcA family.

Its function is as follows. Negative regulator of class I heat shock genes (grpE-dnaK-dnaJ and groELS operons). Prevents heat-shock induction of these operons. This is Heat-inducible transcription repressor HrcA from Staphylococcus aureus (strain MRSA252).